Here is a 183-residue protein sequence, read N- to C-terminus: MRKLLRPFYERDTVLVAKELLGKYLVHHDGLEEKIGRIVEVEAYLGQHDLACHSSKGLTKRTKVMFGPAGYAYVYLIYGMYYCMNVVTEKEGIGSAVLIRALEPIKNIQDRTQGPGLLSKAMRIDSKLNHRDLLSNDFYIAEPNSPTDFTIIEKPRIGVHYAKEWANELLRFYIKDNPYISKT.

It belongs to the DNA glycosylase MPG family.

This Legionella pneumophila subsp. pneumophila (strain Philadelphia 1 / ATCC 33152 / DSM 7513) protein is Putative 3-methyladenine DNA glycosylase.